A 263-amino-acid chain; its full sequence is Sepiapterin reductase (263 aa).

NADP(+) contacts are provided by residues 18 to 24 (GASRGFG), 46 to 47 (RT), and 73 to 74 (DL). Substrate contacts are provided by residues 160–161 (SL) and Tyr173. Lys177 serves as a coordination point for NADP(+). Gly202 is a binding site for substrate. 204–209 (LDTDMH) contributes to the NADP(+) binding site. Asp260 lines the substrate pocket.

Belongs to the sepiapterin reductase family. As to quaternary structure, homodimer.

The protein resides in the cytoplasm. The catalysed reaction is L-erythro-7,8-dihydrobiopterin + NADP(+) = L-sepiapterin + NADPH + H(+). It catalyses the reaction (6R)-L-erythro-5,6,7,8-tetrahydrobiopterin + 2 NADP(+) = 6-pyruvoyl-5,6,7,8-tetrahydropterin + 2 NADPH + 2 H(+). In terms of biological role, catalyzes the final one or two reductions in tetra-hydrobiopterin biosynthesis to form 5,6,7,8-tetrahydrobiopterin. This is Sepiapterin reductase (spr) from Xenopus laevis (African clawed frog).